The sequence spans 333 residues: Nucleoid-associated protein YE1421 (333 aa).

This sequence belongs to the YejK family.

The protein localises to the cytoplasm. It is found in the nucleoid. This Yersinia enterocolitica serotype O:8 / biotype 1B (strain NCTC 13174 / 8081) protein is Nucleoid-associated protein YE1421.